The sequence spans 704 residues: MPRKTPIERYRNIGISAHIDAGKTTTTERILFYTGVSHKIGEVHDGAATMDWMEQEQERGITITSAATTAFWKGMAGNYPEHRINIIDTPGHVDFTIEVERSMRVLDGACMVYDSVGGVQPQSETVWRQANKYKVPRIAFVNKMDRVGADFFRVQRQIGERLKGVAVPIQIPIGAEEHFQGVVDLVKMKAIVWDDESQGVKFTYEDIPANLVEIAHEWREKMVEAAAEASEELLEKYLTDHHSLTEDEIKAALRRRTIANEIVPMLCGSAFKNKGVQAMLDAVIDYLPSPADVPAILGHDLHDNEAERHPSDDEPFSALAFKIMTDPFVGQLIFFRVYSGVVESGDTLLNATKDKKERLGRILQMHANERKEIKEVRAGDIAAAVGLKEATTGDTLCDPGKPIILEKMEFPEPVISQAVEPKTKADQEKMGLALNRLAQEDPSFRVQTDEESGQTIISGMGELHLEIIVDRMRREFGVEATVGKPQVAYRETVRTVAEDVEGKFVKQSGGRGQYGHAVIKLEPNPGKGYEFLDEIKGGVIPREFIPAVNKGIEETLKSGVLAGYPVVDVKVHLTFGSYHDVDSNENAFRMAGSMAFKEAMRRAKPVLLEPMMAVEVETPEEFMGNVMGDLSSRRGIVQGMEDIAGGGGKLVRAEVPLAEMFGYSTSLRSATQGRATYTMEFKHYAETPSNVSEAVINAKQVGRG.

The 284-residue stretch at Glu-8–Ala-291 folds into the tr-type G domain. GTP-binding positions include Ala-17–Thr-24, Asp-88–His-92, and Asn-142–Asp-145.

Belongs to the TRAFAC class translation factor GTPase superfamily. Classic translation factor GTPase family. EF-G/EF-2 subfamily.

It localises to the cytoplasm. Its function is as follows. Catalyzes the GTP-dependent ribosomal translocation step during translation elongation. During this step, the ribosome changes from the pre-translocational (PRE) to the post-translocational (POST) state as the newly formed A-site-bound peptidyl-tRNA and P-site-bound deacylated tRNA move to the P and E sites, respectively. Catalyzes the coordinated movement of the two tRNA molecules, the mRNA and conformational changes in the ribosome. The sequence is that of Elongation factor G 1 from Burkholderia thailandensis (strain ATCC 700388 / DSM 13276 / CCUG 48851 / CIP 106301 / E264).